The sequence spans 186 residues: Interferon beta (186 aa).

An N-terminal signal peptide occupies residues 1 to 21; the sequence is MTGRCILQIALLVCFFTTAHS. Residue Tyr-24 is modified to Phosphotyrosine. N-linked (GlcNAc...) asparagine glycans are attached at residues Asn-46, Asn-101, Asn-131, and Asn-136. Cys-52 and Cys-161 are disulfide-bonded.

The protein belongs to the alpha/beta interferon family. In terms of assembly, monomer.

Its subcellular location is the secreted. Its function is as follows. Type I interferon cytokine that plays a key role in the innate immune response to infection, developing tumors and other inflammatory stimuli. Signals via binding to high-affinity (IFNAR2) and low-affinity (IFNAR1) heterodimeric receptor, activating the canonical Jak-STAT signaling pathway resulting in transcriptional activation or repression of interferon-regulated genes that encode the effectors of the interferon response, such as antiviral proteins, regulators of cell proliferation and differentiation, and immunoregulatory proteins. Signals mostly via binding to a IFNAR1-IFNAR2 heterodimeric receptor, but can also function with IFNAR1 alone and independently of Jak-STAT pathways. Elicits a wide variety of responses, including antiviral and antibacterial activities, and can regulate the development of B-cells, myelopoiesis and lipopolysaccharide (LPS)-inducible production of tumor necrosis factor. Plays a role in neuronal homeostasis by regulating dopamine turnover and protecting dopaminergic neurons: acts by promoting neuronal autophagy and alpha-synuclein clearance, thereby preventing dopaminergic neuron loss. IFNB1 is more potent than interferon-alpha (IFN-alpha) in inducing the apoptotic and antiproliferative pathways required for control of tumor cell growth. The protein is Interferon beta (IFNB1) of Felis catus (Cat).